The following is a 425-amino-acid chain: Histidine--tRNA ligase 1 (425 aa).

It belongs to the class-II aminoacyl-tRNA synthetase family. Homodimer.

The protein localises to the cytoplasm. It carries out the reaction tRNA(His) + L-histidine + ATP = L-histidyl-tRNA(His) + AMP + diphosphate + H(+). The polypeptide is Histidine--tRNA ligase 1 (Bacillus cereus (strain ZK / E33L)).